A 163-amino-acid chain; its full sequence is MHKKYFIGTSILIAVFVVIFDQVTKYIIATTMKIGDSFEVIPHFLNITSHRNNGAAWGILSGKMTFFFIITIIILIALVYFFIKDAQYNLFMQVAISLLFAGALGNFIDRVLTGEVVDFIDTNIFGYDFPIFNIADSSLTIGVILIIIALLKDTSNKKEKEVK.

The next 3 helical transmembrane spans lie at 11–31 (ILIA…IATT), 63–83 (KMTF…YFFI), and 88–108 (YNLF…GNFI). Residues aspartate 118 and aspartate 136 contribute to the active site. The chain crosses the membrane as a helical span at residues 131–151 (IFNIADSSLTIGVILIIIALL).

The protein belongs to the peptidase A8 family.

It localises to the cell membrane. It catalyses the reaction Release of signal peptides from bacterial membrane prolipoproteins. Hydrolyzes -Xaa-Yaa-Zaa-|-(S,diacylglyceryl)Cys-, in which Xaa is hydrophobic (preferably Leu), and Yaa (Ala or Ser) and Zaa (Gly or Ala) have small, neutral side chains.. Its pathway is protein modification; lipoprotein biosynthesis (signal peptide cleavage). Its function is as follows. This protein specifically catalyzes the removal of signal peptides from prolipoproteins. This is Lipoprotein signal peptidase from Staphylococcus aureus (strain MRSA252).